The chain runs to 137 residues: Cucumber peeling cupredoxin (137 aa).

Q1 carries the post-translational modification Pyrrolidone carboxylic acid. In terms of domain architecture, Phytocyanin spans 3–107 (TVHIVGDNTG…GQKLSINVVA (105 aa)). Residues H46, C89, H94, and Q99 each contribute to the Cu cation site. C60 and C95 are oxidised to a cystine. N109 carries N-linked (GlcNAc...) asparagine glycosylation. Positions 112-137 (VSMPPPSSSPPSSVMPPPVMPPPSPS) are disordered. Pro residues predominate over residues 114–137 (MPPPSSSPPSSVMPPPVMPPPSPS). P115 carries the 4-hydroxyproline; partial modification. P116, P117, P121, and P122 each carry 4-hydroxyproline. The residue at position 127 (P127) is a 4-hydroxyproline; partial. 4-hydroxyproline is present on residues P128, P129, P133, P134, and P136.

The sequence is that of Cucumber peeling cupredoxin from Cucumis sativus (Cucumber).